The chain runs to 296 residues: MASIKEELISAAESESQVMQIVQAALEGIDMDALTSMTPGLPQTVRQTAINSLLSSKKLAIQQAPGGVLRLKVNTSEQIAGTEEEQVIYSLIEESKTRGIWIKELREGSGLNQLQLRKTLKSLETKKLIKTIKAVGTTRKCYILFSIEPDMSLTGGTFYSDQQLDSELINTLISVCGSYAASRRKHAIDENPNNIQMQREASYIRPQEIAQFITEKRVLNVPLSLEDLERILEVAVLDGTIERRADGKIRACPPRSSISPLVSVPCAICPVVEDCRPGYVISPQSCDYMKNWLADL.

The protein belongs to the eukaryotic RPC34/RPC39 RNA polymerase subunit family.

The protein localises to the nucleus. DNA-dependent RNA polymerase catalyzes the transcription of DNA into RNA using the four ribonucleoside triphosphates as substrates. Specific peripheric component of RNA polymerase III which synthesizes small RNAs, such as 5S rRNA and tRNAs. The polypeptide is Probable DNA-directed RNA polymerase III subunit RPC6 (Caenorhabditis elegans).